The following is a 780-amino-acid chain: Phosphoenolpyruvate synthase (780 aa).

The Tele-phosphohistidine intermediate role is filled by histidine 409. The substrate site is built by arginine 499, arginine 566, glutamate 668, glycine 689, serine 690, asparagine 691, and aspartate 692. A Mg(2+)-binding site is contributed by glutamate 668. Position 692 (aspartate 692) interacts with Mg(2+).

Belongs to the PEP-utilizing enzyme family. It depends on Mg(2+) as a cofactor.

The catalysed reaction is pyruvate + ATP + H2O = phosphoenolpyruvate + AMP + phosphate + 2 H(+). The protein operates within carbohydrate biosynthesis; gluconeogenesis. Catalyzes the phosphorylation of pyruvate to phosphoenolpyruvate. The chain is Phosphoenolpyruvate synthase (ppsA) from Deinococcus radiodurans (strain ATCC 13939 / DSM 20539 / JCM 16871 / CCUG 27074 / LMG 4051 / NBRC 15346 / NCIMB 9279 / VKM B-1422 / R1).